Reading from the N-terminus, the 454-residue chain is Na(+)/H(+) antiporter NhaA (454 aa).

10 consecutive transmembrane segments (helical) span residues 22–42 (ISGL…NLPF), 64–84 (MGLG…TVGL), 106–126 (LCAV…ISLF), 150–170 (GWAV…ALFA), 190–210 (LLAI…YWFL), 228–248 (VPWL…FEAG), 284–304 (PFSA…VHFE), 306–326 (LTLA…LVVG), 355–375 (MFPA…IASL), and 386–406 (ARFG…ILLS).

This sequence belongs to the NhaA Na(+)/H(+) (TC 2.A.33) antiporter family.

The protein resides in the cell membrane. It carries out the reaction Na(+)(in) + 2 H(+)(out) = Na(+)(out) + 2 H(+)(in). Functionally, na(+)/H(+) antiporter that extrudes sodium in exchange for external protons. This is Na(+)/H(+) antiporter NhaA from Bifidobacterium adolescentis (strain ATCC 15703 / DSM 20083 / NCTC 11814 / E194a).